Here is a 784-residue protein sequence, read N- to C-terminus: Ubiquitin carboxyl-terminal hydrolase 1 (784 aa).

Disordered stretches follow at residues 1 to 21 (MPGVIPSESNGLSRGSPSKKN) and 33 to 54 (TKRALDFTDSQEDEEKASEYRG). Residues 7 to 16 (SESNGLSRGS) show a composition bias toward polar residues. Phosphoserine occurs at positions 16, 42, and 67. The region spanning 81–784 (VGLNNLGNTC…TPYLLFYKKL (704 aa)) is the USP domain. Cysteine 90 serves as the catalytic Nucleophile. Basic and acidic residues-rich tracts occupy residues 232–243 (KVEEKSLQKEET) and 252–264 (DSTRNLDDLKEQL). Disordered regions lie at residues 232–341 (KVEE…KINW) and 363–411 (TNQR…SSEA). Residues 389 to 407 (NTVNGSGPASPGSSVTPVD) show a composition bias toward polar residues. Position 475 is a phosphoserine (serine 475). Histidine 593 serves as the catalytic Proton acceptor. Residues 686–723 (PEKVVGTPFTDSRNSETNDTNGTQESDRSKESSDQTGI) are disordered. Polar residues predominate over residues 694–709 (FTDSRNSETNDTNGTQ). A Phosphoserine modification is found at serine 767.

It belongs to the peptidase C19 family. Interacts with FANCD2 and PCNA. Interacts with WDR48. Interacts with ATAD5; the interaction regulates USP1-mediated PCNA deubiquitination. In terms of processing, autocatalytic cleavage of USP1 following UV irradiation inactivates it, leading to an increase in ubiquitinated PCNA, recruitment of POLH and translesion synthesis. Ubiquitinated by the CRL2(KLHDC2) complex following autocatalytic cleavage, leading to its degradation: the CRL2(KLHDC2) complex recognizes the diglycine (Gly-Gly) at the C-terminus.

It localises to the nucleus. It carries out the reaction Thiol-dependent hydrolysis of ester, thioester, amide, peptide and isopeptide bonds formed by the C-terminal Gly of ubiquitin (a 76-residue protein attached to proteins as an intracellular targeting signal).. In terms of biological role, negative regulator of DNA damage repair which specifically deubiquitinates monoubiquitinated FANCD2. Also involved in PCNA-mediated translesion synthesis (TLS) by deubiquitinating monoubiquitinated PCNA. Has almost no deubiquitinating activity by itself and requires the interaction with WDR48 to have a high activity. The chain is Ubiquitin carboxyl-terminal hydrolase 1 from Rattus norvegicus (Rat).